Here is a 621-residue protein sequence, read N- to C-terminus: tRNA uridine 5-carboxymethylaminomethyl modification enzyme MnmG (621 aa).

9-14 (GGGHAG) provides a ligand contact to FAD. 270-284 (GPRYCPSIEDKIVKF) contacts NAD(+).

The protein belongs to the MnmG family. As to quaternary structure, homodimer. Heterotetramer of two MnmE and two MnmG subunits. FAD is required as a cofactor.

Its subcellular location is the cytoplasm. Functionally, NAD-binding protein involved in the addition of a carboxymethylaminomethyl (cmnm) group at the wobble position (U34) of certain tRNAs, forming tRNA-cmnm(5)s(2)U34. This chain is tRNA uridine 5-carboxymethylaminomethyl modification enzyme MnmG, found in Borrelia garinii subsp. bavariensis (strain ATCC BAA-2496 / DSM 23469 / PBi) (Borreliella bavariensis).